We begin with the raw amino-acid sequence, 141 residues long: Transcription antitermination protein NusB (141 aa).

It belongs to the NusB family.

Functionally, involved in transcription antitermination. Required for transcription of ribosomal RNA (rRNA) genes. Binds specifically to the boxA antiterminator sequence of the ribosomal RNA (rrn) operons. The protein is Transcription antitermination protein NusB of Neisseria meningitidis serogroup A / serotype 4A (strain DSM 15465 / Z2491).